Consider the following 160-residue polypeptide: Transcription antitermination protein NusB (160 aa).

Belongs to the NusB family.

In terms of biological role, involved in transcription antitermination. Required for transcription of ribosomal RNA (rRNA) genes. Binds specifically to the boxA antiterminator sequence of the ribosomal RNA (rrn) operons. In Rhizobium leguminosarum bv. trifolii (strain WSM2304), this protein is Transcription antitermination protein NusB.